We begin with the raw amino-acid sequence, 464 residues long: Mothers against decapentaplegic homolog 5 (464 aa).

The MH1 domain maps to 13-137 (PAVKRLLGWK…YKRVESPVLP (125 aa)). Positions 65, 110, 122, and 127 each coordinate Zn(2+). The segment at 166 to 258 (HMPLNATFPE…LAPQNMPRGD (93 aa)) is disordered. Over residues 173–183 (FPESFQQHSGG) the composition is skewed to polar residues. Over residues 199 to 216 (ASSGTYPNSPASSGPSSP) the composition is skewed to low complexity. Positions 237–251 (QDGSQSMETGSSLAP) are enriched in polar residues. Positions 270–464 (WCSIVYYELN…SPLNPISSVS (195 aa)) constitute an MH2 domain.

This sequence belongs to the dwarfin/SMAD family. May form trimers with the co-SMAD SMAD4.

Its subcellular location is the cytoplasm. It localises to the nucleus. Involved in ventralization. May mediate Bmp2b signaling during early phases of embryonic dorsal-ventral pattern formation. Required for initiation of Smad1 expression during gastrulation. This is Mothers against decapentaplegic homolog 5 (smad5) from Danio rerio (Zebrafish).